Consider the following 157-residue polypeptide: Succinate dehydrogenase [ubiquinone] cytochrome b small subunit, mitochondrial (157 aa).

Residues 1-45 (MAALVLLRAGLARPRGVPTALLRGTLLRHSAVLTAAADRSAPARQ) constitute a mitochondrion transit peptide. Topologically, residues 46–61 (SHGGAPQGHGSSKAAS) are mitochondrial matrix. A helical membrane pass occupies residues 62 to 83 (LHWTSERAVSALLLGLLPAAYL). The Mitochondrial intermembrane segment spans residues 84–88 (YPGPA). Residues 89-109 (VDYSLAAALTLHGHWGLGQVI) form a helical membrane-spanning segment. Heme b is bound at residue H100. Over 110-118 (TDYVHGDTP) the chain is Mitochondrial matrix. Y112 contacts a ubiquinone. The chain crosses the membrane as a helical span at residues 119–140 (IKVANTGLYVLSAITFTGLCYF). Over 141–157 (NYYDVGICKAVAMLWSI) the chain is Mitochondrial intermembrane.

This sequence belongs to the CybS family. In terms of assembly, component of complex II composed of four subunits: the flavoprotein (FP) SDHA, iron-sulfur protein (IP) SDHB, and a cytochrome b560 composed of SDHC and SDHD.

The protein resides in the mitochondrion inner membrane. It functions in the pathway carbohydrate metabolism; tricarboxylic acid cycle. Membrane-anchoring subunit of succinate dehydrogenase (SDH) that is involved in complex II of the mitochondrial electron transport chain and is responsible for transferring electrons from succinate to ubiquinone (coenzyme Q). SDH also oxidizes malate to the non-canonical enol form of oxaloacetate, enol-oxaloacetate. Enol-oxaloacetate, which is a potent inhibitor of the succinate dehydrogenase activity, is further isomerized into keto-oxaloacetate. This Gallus gallus (Chicken) protein is Succinate dehydrogenase [ubiquinone] cytochrome b small subunit, mitochondrial (SDHD).